The sequence spans 154 residues: Large ribosomal subunit protein bL19 (154 aa).

The disordered stretch occupies residues 1–33; the sequence is MAADPKDTTVTDENTETAATAEVETVASAPTSP. Residues 16 to 27 show a composition bias toward low complexity; that stretch reads ETAATAEVETVA.

Belongs to the bacterial ribosomal protein bL19 family.

Its function is as follows. This protein is located at the 30S-50S ribosomal subunit interface and may play a role in the structure and function of the aminoacyl-tRNA binding site. The sequence is that of Large ribosomal subunit protein bL19 from Parasynechococcus marenigrum (strain WH8102).